The primary structure comprises 213 residues: Ribonuclease HII (213 aa).

The RNase H type-2 domain occupies 20–209; it reads ELVAGVDEVG…VRQAYEALEG (190 aa). A divalent metal cation is bound by residues D26, E27, and D118.

It belongs to the RNase HII family. The cofactor is Mn(2+). Mg(2+) is required as a cofactor.

It localises to the cytoplasm. The catalysed reaction is Endonucleolytic cleavage to 5'-phosphomonoester.. Functionally, endonuclease that specifically degrades the RNA of RNA-DNA hybrids. The sequence is that of Ribonuclease HII from Pseudomonas fluorescens (strain Pf0-1).